The chain runs to 777 residues: ATPase ARSA1 (777 aa).

Residue 110–117 (KGGVGKTS) participates in ATP binding. The active site involves aspartate 139. Residues asparagine 372 and 454 to 461 (KGGVGKTS) contribute to the ATP site. Aspartate 483 is an active-site residue. Asparagine 712 contacts ATP.

This sequence belongs to the arsA ATPase family. Monomer. Interacts with TOC34.

The protein localises to the cytoplasm. It localises to the cytosol. Functionally, ATPase required for the post-translational delivery of tail-anchored (TA) proteins to the chloroplast. Required for the accumulation of TOC34, an essential component of the outer chloroplast membrane translocon (TOC) complex. Recognizes and selectively binds the transmembrane domain of TA proteins in the cytosol. This complex then targets to chloroplast, where the tail-anchored protein is released for insertion. This process is regulated by ATP binding and hydrolysis. In Chlamydomonas reinhardtii (Chlamydomonas smithii), this protein is ATPase ARSA1.